A 105-amino-acid polypeptide reads, in one-letter code: MARALLKFIRVSPIKSRLIAREIQGMNAELALASLEFTPNKAAKIIAKVVASAVANSGNEAADCIVTSCRVDNGPVLKRFRPRARGMASGIRKPTAHILVEVEGK.

Belongs to the universal ribosomal protein uL22 family. As to quaternary structure, part of the 50S ribosomal subunit.

In terms of biological role, this protein binds specifically to 23S rRNA; its binding is stimulated by other ribosomal proteins, e.g. L4, L17, and L20. It is important during the early stages of 50S assembly. It makes multiple contacts with different domains of the 23S rRNA in the assembled 50S subunit and ribosome. The globular domain of the protein is located near the polypeptide exit tunnel on the outside of the subunit, while an extended beta-hairpin is found that lines the wall of the exit tunnel in the center of the 70S ribosome. The sequence is that of Large ribosomal subunit protein uL22 from Sulfurimonas denitrificans (strain ATCC 33889 / DSM 1251) (Thiomicrospira denitrificans (strain ATCC 33889 / DSM 1251)).